We begin with the raw amino-acid sequence, 541 residues long: Membrane protein insertase YidC (541 aa).

Helical transmembrane passes span 6 to 26, 325 to 345, 349 to 369, 420 to 440, 457 to 477, and 500 to 520; these read NILL…WQAD, LVVD…LLMF, FVGN…GLLF, GGCL…WVLL, LSVQ…MFVM, and VIFT…WLVG.

Belongs to the OXA1/ALB3/YidC family. Type 1 subfamily. In terms of assembly, interacts with the Sec translocase complex via SecD. Specifically interacts with transmembrane segments of nascent integral membrane proteins during membrane integration.

The protein resides in the cell inner membrane. Its function is as follows. Required for the insertion and/or proper folding and/or complex formation of integral membrane proteins into the membrane. Involved in integration of membrane proteins that insert both dependently and independently of the Sec translocase complex, as well as at least some lipoproteins. Aids folding of multispanning membrane proteins. The polypeptide is Membrane protein insertase YidC (Shewanella baltica (strain OS223)).